Reading from the N-terminus, the 561-residue chain is Putative transport protein CKO_02260 (561 aa).

5 helical membrane-spanning segments follow: residues 8–28 (LLNG…LCLG), 32–52 (LGSV…LLGQ), 66–86 (FMLF…SIFF), 94–114 (MLAL…GKLF), and 158–178 (NLSL…IVGA). 2 consecutive RCK C-terminal domains span residues 200-288 (RGLD…SFRN) and 292-373 (VFDR…RIGF). Helical transmembrane passes span 383 to 403 (LLAF…TFQF), 406 to 426 (FSFG…LGFL), 447 to 467 (FGLM…IGNG), 475 to 495 (MLIA…LFGA), and 540 to 560 (AIAN…WPGL).

It belongs to the AAE transporter (TC 2.A.81) family. YbjL subfamily.

The protein localises to the cell membrane. The chain is Putative transport protein CKO_02260 from Citrobacter koseri (strain ATCC BAA-895 / CDC 4225-83 / SGSC4696).